A 308-amino-acid chain; its full sequence is Aspartate carbamoyltransferase catalytic subunit (308 aa).

Carbamoyl phosphate is bound by residues Arg-59 and Thr-60. Position 87 (Lys-87) interacts with L-aspartate. Positions 109, 137, and 140 each coordinate carbamoyl phosphate. L-aspartate is bound by residues Arg-170 and Arg-224. The carbamoyl phosphate site is built by Gly-265 and Pro-266.

This sequence belongs to the aspartate/ornithine carbamoyltransferase superfamily. ATCase family. Heterododecamer (2C3:3R2) of six catalytic PyrB chains organized as two trimers (C3), and six regulatory PyrI chains organized as three dimers (R2).

It carries out the reaction carbamoyl phosphate + L-aspartate = N-carbamoyl-L-aspartate + phosphate + H(+). The protein operates within pyrimidine metabolism; UMP biosynthesis via de novo pathway; (S)-dihydroorotate from bicarbonate: step 2/3. Functionally, catalyzes the condensation of carbamoyl phosphate and aspartate to form carbamoyl aspartate and inorganic phosphate, the committed step in the de novo pyrimidine nucleotide biosynthesis pathway. The chain is Aspartate carbamoyltransferase catalytic subunit from Flavobacterium psychrophilum (strain ATCC 49511 / DSM 21280 / CIP 103535 / JIP02/86).